The primary structure comprises 492 residues: Cytochrome P450 monooxygenase ATEG_03631 (492 aa).

The chain crosses the membrane as a helical span at residues 10-30; it reads FATLNPMVVVAIPVFLFVISL. Asparagine 309 carries an N-linked (GlcNAc...) asparagine glycan. Cysteine 457 is a heme binding site.

The protein belongs to the cytochrome P450 family. The cofactor is heme.

The protein resides in the membrane. The protein operates within secondary metabolite biosynthesis. In terms of biological role, cytochrome P450 monooxygenase; part of the cluster A that mediates the biosynthesis of azasperpyranones, members of the azaphilone family that exhibit anti-cancer activities. Azasperpyranones are synthesized by 2 clusters, A and B. Cluster A is responsible for the production of the polyhydric phenol moiety while the azaphilonoid scaffold is produced by the cluster B. The non-reducing polyketide synthase ATEG_03629 produces 5-methyl orsellinic acid, which is then reduced to 5-methyl orsellinic aldehyde by the NRPS-like protein ATEG_03630. 5-methyl orsellinic aldehyde is then first hydroxylated by the FAD-dependent monooxygenase ATEG_03635 and subsequently hydroxylated by the cytochrome P450 monooxygenase ATEG_03631 to produce the unstable polyhydric phenol precursor of azasperpyranones. On the other hand, the polyketide synthase ATEG_07659 is responsible for producing the 3,5-dimethyloctadienone moiety from acetyl-CoA, three malonyl-CoA, and two S-adenosyl methionines (SAM). The 3,5-dimethyloctadienone moiety is then loaded onto the SAT domain of ATEG_07661 and extended with four malonyl-CoA and one SAM, which leads to the formation of 2,4-dihydroxy-6-(5,7-dimethyl-2-oxo-trans-3-trans-5-nonadienyl)-3-methylbenzaldehyde (compound 8) after reductive release and aldol condensation. The FAD-dependent monooxygenase ATEG_07662 is the next enzyme in the biosynthesis sequence and hydroxylates the side chain at the benzylic position of compound 8. In Aspergillus nidulans, afoF, the ortholog of the FAD-dependent oxygenase ATEG_07660, is the key enzyme for the biosynthesis of asperfuranone by catalyzing the hydroxylation at C-8 of to prevent the formation of a six-membered ring hemiacetal intermediate and thus facilitating the formation of a five-membered ring to produce asperfuranone. In Aspergillus terreus, ATEG_07660 is probably not functional, which leads to the formation of the six-membered ring hemiacetal intermediate presperpyranone instead of asperfuranone. Finally, ATEG_03636 is involved in the condensation of the polyhydric phenol moiety produced by cluster A and the perasperpyranone precursor produced by cluster B, to yield azasperpyranone A. Further modifications of azasperpyranone A result in the production of derivatives, including azasperpyranone B to F. The sequence is that of Cytochrome P450 monooxygenase ATEG_03631 from Aspergillus terreus (strain NIH 2624 / FGSC A1156).